A 269-amino-acid polypeptide reads, in one-letter code: MIRALLLSTLVAGALSCGLPANLPQLPRVVGGEDARPNSWPWQVSLQYDSSGQWRHTCGGTLVDQSWVLTAAHCISSSRTYRVVLGRHSLSTNEPGSLAVKVSKLVVHQDWNSNQLSNGNDIALLKLASPVSLTDKIQLGCLPAAGTILPNNYVCYVTGWGRLQTNGASPDILQQGQLLVVDYATCSKPGWWGSTVKTNMICAGGDGIISSCNGDSGGPLNCQGANGQWQVHGIVSFGSSLGCNYYHKPSVFTRVSNYIDWINSVIANN.

Residues 1-16 (MIRALLLSTLVAGALS) form the signal peptide. Positions 17 to 28 (CGLPANLPQLPR) are cleaved as a propeptide — activation peptide. Residues 29–267 (VVGGEDARPN…YIDWINSVIA (239 aa)) form the Peptidase S1 domain. A disulfide bridge connects residues Cys-58 and Cys-74. Residues His-73 and Asp-121 each act as charge relay system in the active site. Disulfide bonds link Cys-155–Cys-222, Cys-186–Cys-202, and Cys-212–Cys-243. Residue Ser-216 is the Charge relay system of the active site.

Belongs to the peptidase S1 family. Elastase subfamily. Interacts with CPA1. Interacts with SERPINA1. As to expression, pancreas.

It is found in the secreted. It carries out the reaction Preferential cleavage: Leu-|-Xaa, Met-|-Xaa and Phe-|-Xaa. Hydrolyzes elastin.. In terms of biological role, elastase that enhances insulin signaling and might have a physiologic role in cellular glucose metabolism. Circulates in plasma and reduces platelet hyperactivation, triggers both insulin secretion and degradation, and increases insulin sensitivity. In Sus scrofa (Pig), this protein is Chymotrypsin-like elastase family member 2A (CELA2A).